The following is a 201-amino-acid chain: Pyridoxal 5'-phosphate synthase subunit PdxT (201 aa).

49–51 (GES) contacts L-glutamine. Residue Cys81 is the Nucleophile of the active site. Residues Arg110 and 139–140 (IR) contribute to the L-glutamine site. Catalysis depends on charge relay system residues His180 and Glu182.

This sequence belongs to the glutaminase PdxT/SNO family. In the presence of PdxS, forms a dodecamer of heterodimers. Only shows activity in the heterodimer.

The catalysed reaction is aldehydo-D-ribose 5-phosphate + D-glyceraldehyde 3-phosphate + L-glutamine = pyridoxal 5'-phosphate + L-glutamate + phosphate + 3 H2O + H(+). It carries out the reaction L-glutamine + H2O = L-glutamate + NH4(+). The protein operates within cofactor biosynthesis; pyridoxal 5'-phosphate biosynthesis. Catalyzes the hydrolysis of glutamine to glutamate and ammonia as part of the biosynthesis of pyridoxal 5'-phosphate. The resulting ammonia molecule is channeled to the active site of PdxS. This chain is Pyridoxal 5'-phosphate synthase subunit PdxT, found in Salinispora tropica (strain ATCC BAA-916 / DSM 44818 / JCM 13857 / NBRC 105044 / CNB-440).